Reading from the N-terminus, the 209-residue chain is ATP synthase subunit b', chloroplastic (209 aa).

The transit peptide at M1 to A62 directs the protein to the chloroplast. The helical transmembrane segment at I67–F87 threads the bilayer.

Belongs to the ATPase B chain family. F-type ATPases have 2 components, F(1) - the catalytic core - and F(0) - the membrane proton channel. F(1) has five subunits: alpha(3), beta(3), gamma(1), delta(1), epsilon(1). F(0) has four main subunits: a(1), b(1), b'(1) and c(10-14). The alpha and beta chains form an alternating ring which encloses part of the gamma chain. F(1) is attached to F(0) by a central stalk formed by the gamma and epsilon chains, while a peripheral stalk is formed by the delta, b and b' chains.

Its subcellular location is the plastid. It localises to the chloroplast thylakoid membrane. F(1)F(0) ATP synthase produces ATP from ADP in the presence of a proton or sodium gradient. F-type ATPases consist of two structural domains, F(1) containing the extramembraneous catalytic core and F(0) containing the membrane proton channel, linked together by a central stalk and a peripheral stalk. During catalysis, ATP synthesis in the catalytic domain of F(1) is coupled via a rotary mechanism of the central stalk subunits to proton translocation. Its function is as follows. Component of the F(0) channel, it forms part of the peripheral stalk, linking F(1) to F(0). The b'-subunit is a diverged and duplicated form of b found in plants and photosynthetic bacteria. This Chlamydomonas reinhardtii (Chlamydomonas smithii) protein is ATP synthase subunit b', chloroplastic.